The chain runs to 367 residues: D-alanine--D-alanine ligase (367 aa).

The 207-residue stretch at 145–351 folds into the ATP-grasp domain; the sequence is KRLLRDAGLP…QPALMDALIA (207 aa). 174 to 229 lines the ATP pocket; that stretch reads HAVGCSELFIKPANLGSSVGISKARTPQEFAAACDLALRFDGKILIERCISPVREI. Mg(2+) is bound by residues aspartate 306, glutamate 318, and asparagine 320.

Belongs to the D-alanine--D-alanine ligase family. Mg(2+) serves as cofactor. Requires Mn(2+) as cofactor.

The protein localises to the cytoplasm. It catalyses the reaction 2 D-alanine + ATP = D-alanyl-D-alanine + ADP + phosphate + H(+). It functions in the pathway cell wall biogenesis; peptidoglycan biosynthesis. Functionally, cell wall formation. The protein is D-alanine--D-alanine ligase of Bradyrhizobium sp. (strain BTAi1 / ATCC BAA-1182).